The sequence spans 655 residues: MLITHLIDSLSDRAVITPLTPTSVIIYDKNELKVYVGFTNNRNSLEYTKEVVLLLSTEIPKKAEIREIIVSKNGDYVILEGPRSLFVVRIGAEILVAKPDRLPSECFCECYPLHDSLLLQNISLSVVKVRLLPEKCDEKTFVTAVLFSDNCIRFYNLQKKFDSLLLAVDFRNHLHQVHDENVANNTFGLQKALVSFDLIPPKPNTSHFSIISIDSDCDFYTSFVHFSCFKEGYAPRIHRIEPVDGLPCDPLDLRYIQTTNPRICSVFVLVSGGGVLSHLVVFPNEFGEFRFLVKDQLRLPSSNGDPRIVQNQIRSLKVSRYEIATSSSLFSVNIFPWFEALTSISPTSTLEKETRVSELVDAVIPSDELSNTTKWTGARALRAVSVQLTQSLATEEEELLPESENIMHLVILENKDGQPAHLFNISTFDNIWSTENKTSFGRDSVSQPPMKSTGSLEQQLAALKPLAACVISEKVSCEEAIDAAMKFFDAVDERLKKHCEISKLFVERCLAVSSSAQALDEKQQSVDQRLIEETNTVEELKIRMHETKERMEGARKGINVLFHRVDENVPLSDNEIRIFERLKEHQKMLSDMTKLVPKMTLDSNEIHRMANIVLKKRGTGEEQNRFAAVEKNATEIESLEARENKLNTGISELSI.

Residues 263 to 283 traverse the membrane as a helical segment; that stretch reads ICSVFVLVSGGGVLSHLVVFP.

The protein resides in the membrane. In Caenorhabditis elegans, this protein is Protein npp-24.